The following is a 637-amino-acid chain: Early transcription factor 70 kDa subunit (637 aa).

The Helicase ATP-binding domain occupies 32–185 (RTIIDENRSV…GHIIDLMSEE (154 aa)). 45-52 (HIMGSGKT) contacts ATP. A DEXH box motif is present at residues 135 to 138 (DEAH). A Helicase C-terminal domain is found at 327-507 (KFKYFINRIQ…VLPFDIKKLL (181 aa)).

The protein belongs to the helicase family. VETF subfamily. Heterodimer of a 70 kDa and a 82 kDa subunit. Part of the early transcription complex composed of ETF, RAP94/OPG109, and the DNA-directed RNA polymerase.

It is found in the virion. In terms of biological role, acts with RNA polymerase to initiate transcription from early gene promoters. Is recruited by the RPO-associated protein of 94 kDa RAP94/OPG109 to form the early transcription complex, which also contains the core RNA polymerase. ETF heterodimer binds to early gene promoters. This is Early transcription factor 70 kDa subunit (OPG118) from Homo sapiens (Human).